The sequence spans 468 residues: MARVLRDPHWVAVGLLTWAALGLLVAGHEGHGDLHRDVEEDFHGHSHGHSHEDFHHGHSHGHGHTHESIWHGHAHSHDHGHSREDVHHGHSHGHSHDSLHHRGHGHSHGASREAGAPGIKHHLDTVTLWAYALGATVLISAAPFFVLFLIPVESNSPRHRSLLQILLSFASGGLLGDAFLHLIPHALEPHSHDTPAQPGHGHSHSGQGPILSVGLWVLSGIVAFLVVEKFVRHVKGGHGHAHAHGHGHSHGDSHAHGHSHAHGDRHECPSKGKPSSEDEKEAGGLRKRRGGDTGPRDGPLKPQNPEEEKTGSDLRVSGYLNLAADLAHNFTDGLAIGASFRGGRGLGILTTMTVLLHEVPHEVGDFAILVQSGCSKKQAMRLQLLTAIGALAGTACALLTEGGAVGSEVAGGAGPGWVLPFTAGGFIYVATVSVLPELLREASPLQSLLEVLGLLGGVAMMVLIAHLE.

The chain crosses the membrane as a helical span at residues 10 to 30; it reads WVAVGLLTWAALGLLVAGHEG. 2 stretches are compositionally biased toward basic and acidic residues: residues 36-56 and 64-100; these read RDVE…DFHH and HTHE…DSLH. The disordered stretch occupies residues 36–116; sequence RDVEEDFHGH…SHGASREAGA (81 aa). H64 bears the Pros-methylhistidine mark. 3 consecutive transmembrane segments (helical) span residues 132–152, 163–183, and 208–228; these read ALGA…LIPV, LQIL…LHLI, and GPIL…LVVE. Positions 237 to 248 are enriched in basic residues; it reads GHGHAHAHGHGH. The disordered stretch occupies residues 237 to 313; sequence GHGHAHAHGH…NPEEEKTGSD (77 aa). A compositionally biased stretch (basic and acidic residues) spans 249-312; the sequence is SHGDSHAHGH…QNPEEEKTGS (64 aa). A run of 3 helical transmembrane segments spans residues 385–405, 409–429, and 447–467; these read LTAI…GGAV, VAGG…FIYV, and SLLE…IAHL.

It belongs to the ZIP transporter (TC 2.A.5) family. KE4/Catsup subfamily. Homodimer. Rapidly phosphorylated by CK2 following Zn(2+) treatment. This phosphorylation is required for efficient cytosolic Zn(2+) release.

The protein localises to the endoplasmic reticulum membrane. The protein resides in the golgi apparatus. It localises to the cis-Golgi network membrane. The enzyme catalyses Zn(2+)(in) = Zn(2+)(out). Transports Zn(2+) from the endoplasmic reticulum (ER)/Golgi apparatus to the cytosol, playing an essential role in the regulation of cytosolic zinc levels. Acts as a gatekeeper of zinc release from intracellular stores, requiring post-translational activation by phosphorylation on residues, resulting in activation of multiple downstream pathways leading to cell growth and proliferation. Has an essential role in B cell development and is required for proper B cell receptor signaling. Plays an important role in maintaining intestinal epithelial homeostasis and skin dermis development by regulating ER function. Controls cell signaling pathways involved in glucose metabolism in skeletal muscle. Has a protective role against ER stress in different biological contexts. Mediates Zn(2+)-induced ferroptosis. This is Zinc transporter SLC39A7 from Rattus norvegicus (Rat).